We begin with the raw amino-acid sequence, 169 residues long: Nucleoside diphosphate kinase 3 (169 aa).

ADP contacts are provided by Lys-29, Arg-105, Thr-111, Arg-122, Val-129, and Asn-132. His-135 serves as the catalytic Pros-phosphohistidine intermediate.

Belongs to the NDK family. In terms of assembly, homohexamer. Mg(2+) is required as a cofactor.

It localises to the mitochondrion outer membrane. The protein resides in the cytoplasm. It is found in the cytoskeleton. Its subcellular location is the cilium basal body. The enzyme catalyses a 2'-deoxyribonucleoside 5'-diphosphate + ATP = a 2'-deoxyribonucleoside 5'-triphosphate + ADP. The catalysed reaction is a ribonucleoside 5'-diphosphate + ATP = a ribonucleoside 5'-triphosphate + ADP. Catalyzes the phosphorylation of ribonucleosides and deoxyribonucleoside diphosphates, other than ATP, into the corresponding triphosphates with ATP as the major phosphate donor. The ATP gamma phosphate is transferred to the nucleoside diphosphate beta phosphate via a ping-pong mechanism, using a phosphorylated active-site intermediate. Through the catalyzed exchange of gamma-phosphate between di- and triphosphonucleosides participates in regulation of intracellular nucleotide homeostasis. Required for ciliary function during renal development. In terms of biological role, independently of its kinase activity, facilitates mitochondrial tethering prior to membrane fusion through its direct membrane-binding and hexamerization. Implicated in repair of both single- and double-stranded breaks in DNA, independently of its kinase activity. The polypeptide is Nucleoside diphosphate kinase 3 (Danio rerio (Zebrafish)).